A 559-amino-acid chain; its full sequence is uncharacterized protein (559 aa).

11 helical membrane-spanning segments follow: residues 103-123 (LAAL…NGLF), 139-159 (FGYY…LFYY), 192-212 (AGIT…SFPF), 223-243 (FFLI…IFLL), 263-283 (WSWV…TLAV), 302-322 (MLIL…SGVA), 348-368 (AAAF…NISD), 387-407 (IRRA…PWKI), 413-434 (AFLA…IFVA), 466-486 (ALIA…MSIN), and 501-521 (IGYF…NLVF).

Belongs to the purine-cytosine permease (2.A.39) family.

Its subcellular location is the golgi apparatus membrane. This is an uncharacterized protein from Schizosaccharomyces pombe (strain 972 / ATCC 24843) (Fission yeast).